The sequence spans 125 residues: MVTLTDAAVNTLELAVTGEVRRRRGRLRIAVADGGCAGHKYQMGLEATAGDDVLTFGPVTIFVDPTSQPFLTGVVVDFVEGVEGAGFKFDNPNATGSCGCGKSFSAGPGGSCSSAPAPGGCGTAH.

This sequence belongs to the HesB/IscA family.

This is an uncharacterized protein from Azospirillum brasilense.